We begin with the raw amino-acid sequence, 299 residues long: Methylsterol monooxygenase 1-2 (299 aa).

3 helical membrane-spanning segments follow: residues 39 to 59 (CHNILFLFLIFSLVPLPLVFI), 96 to 116 (FILVVGPLQLVSYPSIQMIEI), and 118 to 138 (SGLPLPSCMEIVAQLVVYFLV). The Fatty acid hydroxylase domain maps to 132–267 (LVVYFLVEDY…FTYCDYIYGT (136 aa)). A Histidine box-1 motif is present at residues 147–151 (HRFFH). The Histidine box-2 signature appears at 160-164 (HHIHH). The helical transmembrane segment at 189-209 (TFLGPAIAPGHMITFWLWIAL) threads the bilayer. The Histidine box-3 signature appears at 239-245 (YHDYHHY).

This sequence belongs to the sterol desaturase family. Interacts with ACBP1. Fe cation is required as a cofactor. As to expression, expressed in embryo sacs, pollen and trichomes. Observed in leaves, roots, siliques and flowers.

The protein localises to the endoplasmic reticulum membrane. The catalysed reaction is 4,4-dimethyl-5alpha-cholest-7-en-3beta-ol + 6 Fe(II)-[cytochrome b5] + 3 O2 + 5 H(+) = 4alpha-carboxy-4beta-methyl-5alpha-cholest-7-ene-3beta-ol + 6 Fe(III)-[cytochrome b5] + 4 H2O. The enzyme catalyses 24-methylenecycloartanol + 6 Fe(II)-[cytochrome b5] + 3 O2 + 5 H(+) = 4alpha-carboxy-4beta,14alpha-dimethyl-9beta,19-cyclo-5alpha-ergost-24(24(1))-en-3beta-ol + 6 Fe(III)-[cytochrome b5] + 4 H2O. Functionally, non-heme iron oxygenase involved in sterols biosynthesis by catalyzing the removal of the first methyl group at the C-4 position. 4,4-dimethyl-9-beta,19-cyclopropylsterols such as 24-methylenecycloartanol are the preferred substrates. Acts as a rate-limiting enzyme in the sterol pathway via interaction with ACBP1; sterols serve as lipid modulators for gene expression of homeodomain-leucine zipper IV transcription factors. Together with SMO1-1, involved in the maintenance of sterol composition to balance auxin and cytokinin activities during embryogenesis. The protein is Methylsterol monooxygenase 1-2 of Arabidopsis thaliana (Mouse-ear cress).